The chain runs to 168 residues: Ribosome maturation factor RimM (168 aa).

A PRC barrel domain is found at 97-168 (PNEYYYYELL…RLVVKVPEWI (72 aa)).

It belongs to the RimM family. In terms of assembly, binds ribosomal protein uS19.

Its subcellular location is the cytoplasm. Its function is as follows. An accessory protein needed during the final step in the assembly of 30S ribosomal subunit, possibly for assembly of the head region. Essential for efficient processing of 16S rRNA. May be needed both before and after RbfA during the maturation of 16S rRNA. It has affinity for free ribosomal 30S subunits but not for 70S ribosomes. This is Ribosome maturation factor RimM from Pseudothermotoga lettingae (strain ATCC BAA-301 / DSM 14385 / NBRC 107922 / TMO) (Thermotoga lettingae).